The chain runs to 394 residues: Tryptophan synthase beta chain (394 aa).

Lys-84 bears the N6-(pyridoxal phosphate)lysine mark.

Belongs to the TrpB family. In terms of assembly, tetramer of two alpha and two beta chains. Pyridoxal 5'-phosphate serves as cofactor.

The catalysed reaction is (1S,2R)-1-C-(indol-3-yl)glycerol 3-phosphate + L-serine = D-glyceraldehyde 3-phosphate + L-tryptophan + H2O. It participates in amino-acid biosynthesis; L-tryptophan biosynthesis; L-tryptophan from chorismate: step 5/5. Functionally, the beta subunit is responsible for the synthesis of L-tryptophan from indole and L-serine. This is Tryptophan synthase beta chain from Clostridium acetobutylicum (strain ATCC 824 / DSM 792 / JCM 1419 / IAM 19013 / LMG 5710 / NBRC 13948 / NRRL B-527 / VKM B-1787 / 2291 / W).